The following is a 325-amino-acid chain: Geranylgeranyl transferase type-2 subunit beta (325 aa).

PFTB repeat units lie at residues 9 to 50 (KEKH…CVLD), 57 to 99 (KEEV…ATYD), 109 to 150 (KVRL…SILG), 157 to 198 (VDPA…AIAN), 208 to 249 (LEEI…AIIG), and 256 to 298 (YEKL…SLMG). Geranylgeranyl diphosphate contacts are provided by residues 183 to 185 (HAA) and 228 to 240 (RPSKLPDVCYSWW). Positions 234, 236, and 286 each coordinate Zn(2+).

It belongs to the protein prenyltransferase subunit beta family. Heterodimer of an alpha and a beta subunit. Zn(2+) is required as a cofactor.

The enzyme catalyses geranylgeranyl diphosphate + L-cysteinyl-[protein] = S-geranylgeranyl-L-cysteinyl-[protein] + diphosphate. In terms of biological role, catalyzes the transfer of a geranyl-geranyl moiety from geranyl-geranyl pyrophosphate to proteins having the C-terminal -XCC or -XCXC, where both cysteines may become modified. Acts on YPT1 and SEC4. This Saccharomyces cerevisiae (strain ATCC 204508 / S288c) (Baker's yeast) protein is Geranylgeranyl transferase type-2 subunit beta (BET2).